Consider the following 201-residue polypeptide: Recombination protein RecR (201 aa).

A C4-type zinc finger spans residues 59 to 74 (CEICGNMDTENICRIC). In terms of domain architecture, Toprim spans 82 to 177 (SIIAIVETVA…KISRLASGIP (96 aa)).

The protein belongs to the RecR family.

May play a role in DNA repair. It seems to be involved in an RecBC-independent recombinational process of DNA repair. It may act with RecF and RecO. The chain is Recombination protein RecR from Rickettsia rickettsii (strain Iowa).